The chain runs to 44 residues: Large ribosomal subunit protein bL34 (44 aa).

Composition is skewed to basic residues over residues 1-22 and 31-44; these read MKRT…RARM and IRAR…RLSV. The segment at 1–44 is disordered; that stretch reads MKRTLGGTSRKRKRTSGFRARMRTPDGRNVIRARRKKGRHRLSV.

This sequence belongs to the bacterial ribosomal protein bL34 family.

The polypeptide is Large ribosomal subunit protein bL34 (Nostoc punctiforme (strain ATCC 29133 / PCC 73102)).